Here is a 255-residue protein sequence, read N- to C-terminus: Dehydrogenase/reductase SDR family member 11 (255 aa).

The N-terminal stretch at 1 to 25 is a signal peptide; that stretch reads MERWRDRLALVTGASGGIGAAVARA. NADP(+)-binding positions include 13–18, 38–39, E44, 65–66, and N92; these read GASGGI, RT, and DL. Substrate-binding residues include S146 and Y161. NADP(+) contacts are provided by residues Y161, K165, 196–199, and K203; that span reads VETQ. The active-site Proton acceptor is Y161.

Belongs to the short-chain dehydrogenases/reductases (SDR) family.

It localises to the secreted. It catalyses the reaction a 3beta-hydroxysteroid + NADP(+) = a 3-oxosteroid + NADPH + H(+). The enzyme catalyses 17beta-estradiol + NAD(+) = estrone + NADH + H(+). The catalysed reaction is 17beta-estradiol + NADP(+) = estrone + NADPH + H(+). It participates in steroid biosynthesis; estrogen biosynthesis. Inhibited by flavonoids including apigenin, luteolin, genistein, kaempferol and quercetin and also by carbenoxolone, zearalenone, glycyrrhetinic, curcumin and flufenamic acid. Catalyzes the conversion of the 17-keto group of estrone, 4- and 5-androstenes and 5-alpha-androstanes into their 17-beta-hydroxyl metabolites and the conversion of the 3-keto group of 3-, 3,17- and 3,20- diketosteroids into their 3-hydroxyl metabolites. Exhibits reductive 3-beta-hydroxysteroid dehydrogenase activity toward 5-beta-androstanes, 5-beta-pregnanes, 4-pregnenes and bile acids. May also reduce endogenous and exogenous alpha-dicarbonyl compounds and xenobiotic alicyclic ketones. The chain is Dehydrogenase/reductase SDR family member 11 (DHRS11) from Bos taurus (Bovine).